The sequence spans 222 residues: Glutathione S-transferase alpha M14 (222 aa).

Met-1 bears the N-acetylmethionine mark. Ala-2 carries the post-translational modification N-acetylalanine; in Glutathione S-transferase alpha M14, N-terminally processed. The GST N-terminal domain occupies 3 to 83 (GKPILHYFNG…YIATKYNLYG (81 aa)). Lys-4 is subject to N6-succinyllysine. Residues Tyr-9, 54-55 (QV), and 67-68 (QT) each bind glutathione. Residues 85-208 (DAKERALIDM…QPGSQRKPPM (124 aa)) form the GST C-terminal domain. Residues 199 to 222 (QPGSQRKPPMDAKKIRRSQEYFPD) are disordered. Positions 206–222 (PPMDAKKIRRSQEYFPD) are enriched in basic and acidic residues.

This sequence belongs to the GST superfamily. Alpha family. In terms of assembly, homodimer or heterodimer of GSTA1 and GSTA2.

Its subcellular location is the cytoplasm. The catalysed reaction is RX + glutathione = an S-substituted glutathione + a halide anion + H(+). It carries out the reaction prostaglandin A2 + glutathione = prostaglandin A2-S-(R)-glutathione. It catalyses the reaction prostaglandin J2 + glutathione = prostaglandin J2-S-(R)-glutathione. The enzyme catalyses (13S)-hydroperoxy-(9Z,11E)-octadecadienoate + 2 glutathione = (13S)-hydroxy-(9Z,11E)-octadecadienoate + glutathione disulfide + H2O. The catalysed reaction is androst-5-ene-3,17-dione = androst-4-ene-3,17-dione. Functionally, glutathione S-transferase that catalyzes the nucleophilic attack of the sulfur atom of glutathione on the electrophilic groups of a wide range of exogenous and endogenous compounds. Involved in the formation of glutathione conjugates of both prostaglandin A2 (PGA2) and prostaglandin J2 (PGJ2). It also catalyzes the isomerization of D5-androstene-3,17-dione (AD) into D4-androstene-3,17-dione and may therefore play an important role in hormone biosynthesis. Through its glutathione-dependent peroxidase activity toward the fatty acid hydroperoxide (13S)-hydroperoxy-(9Z,11E)-octadecadienoate/13-HPODE it is also involved in the metabolism of oxidized linoleic acid. This Sus scrofa (Pig) protein is Glutathione S-transferase alpha M14.